The following is a 398-amino-acid chain: uncharacterized protein (398 aa).

This sequence belongs to the class-V pyridoxal-phosphate-dependent aminotransferase family. Homodimer.

Is essential for optimal growth. This is an uncharacterized protein from Mycobacterium tuberculosis (strain CDC 1551 / Oshkosh).